A 347-amino-acid polypeptide reads, in one-letter code: NADH-ubiquinone oxidoreductase chain 2 (347 aa).

Transmembrane regions (helical) follow at residues 1-21 (MNPL…IITM), 25-45 (HWLT…PLIM), 59-79 (YFLI…INFM), 96-116 (TIIL…FWVP), 123-143 (LLST…SILY), 153-173 (IILA…LNQT), 178-198 (IMAY…IYNP), 200-220 (LMLL…TILI), 239-259 (ILMM…PLSG), 278-298 (ISLT…RLIY), and 325-345 (FLPT…MMFI).

Belongs to the complex I subunit 2 family. As to quaternary structure, core subunit of respiratory chain NADH dehydrogenase (Complex I) which is composed of 45 different subunits. Interacts with TMEM242.

Its subcellular location is the mitochondrion inner membrane. The enzyme catalyses a ubiquinone + NADH + 5 H(+)(in) = a ubiquinol + NAD(+) + 4 H(+)(out). Core subunit of the mitochondrial membrane respiratory chain NADH dehydrogenase (Complex I) that is believed to belong to the minimal assembly required for catalysis. Complex I functions in the transfer of electrons from NADH to the respiratory chain. The immediate electron acceptor for the enzyme is believed to be ubiquinone. The sequence is that of NADH-ubiquinone oxidoreductase chain 2 from Oryzorictes hova (Hova rice tenrec).